A 309-amino-acid polypeptide reads, in one-letter code: tRNA dimethylallyltransferase (309 aa).

9 to 16 (GPTAVGKT) is a binding site for ATP. 11 to 16 (TAVGKT) provides a ligand contact to substrate. Residues 34–37 (DSMQ) are interaction with substrate tRNA.

Belongs to the IPP transferase family. In terms of assembly, monomer. It depends on Mg(2+) as a cofactor.

The enzyme catalyses adenosine(37) in tRNA + dimethylallyl diphosphate = N(6)-dimethylallyladenosine(37) in tRNA + diphosphate. Its function is as follows. Catalyzes the transfer of a dimethylallyl group onto the adenine at position 37 in tRNAs that read codons beginning with uridine, leading to the formation of N6-(dimethylallyl)adenosine (i(6)A). This chain is tRNA dimethylallyltransferase, found in Enterococcus faecalis (strain ATCC 700802 / V583).